The primary structure comprises 204 residues: Phosphoribosyl-dephospho-CoA transferase (204 aa).

Catalysis depends on residues Asp129 and Asp131.

It belongs to the MdcG family.

The enzyme catalyses apo-[malonate decarboxylase ACP] + 2'-(5''-triphospho-alpha-D-ribosyl)-3'-dephospho-CoA = holo-[malonate decarboxylase ACP] + diphosphate. Its function is as follows. Transfers 2'-(5-triphosphoribosyl)-3'-dephosphocoenzyme-A to the apo-[acyl-carrier-protein] of the malonate decarboxylase to yield holo-[acyl-carrier-protein]. The polypeptide is Phosphoribosyl-dephospho-CoA transferase (Pseudomonas putida (Arthrobacter siderocapsulatus)).